A 101-amino-acid polypeptide reads, in one-letter code: Small ribosomal subunit protein uS10 (101 aa).

It belongs to the universal ribosomal protein uS10 family. Part of the 30S ribosomal subunit.

In terms of biological role, involved in the binding of tRNA to the ribosomes. The sequence is that of Small ribosomal subunit protein uS10 from Bacteroides fragilis (strain ATCC 25285 / DSM 2151 / CCUG 4856 / JCM 11019 / LMG 10263 / NCTC 9343 / Onslow / VPI 2553 / EN-2).